A 124-amino-acid chain; its full sequence is Fluoride-specific ion channel FluC (124 aa).

Transmembrane regions (helical) follow at residues 5–25 (VYIA…SGLV), 32–52 (SFPY…GLVM), 67–87 (FAIT…SFET), and 96–116 (LLIA…CTWI). Residues Gly75 and Thr78 each coordinate Na(+).

The protein belongs to the fluoride channel Fluc/FEX (TC 1.A.43) family.

It localises to the cell inner membrane. The enzyme catalyses fluoride(in) = fluoride(out). Its activity is regulated as follows. Na(+) is not transported, but it plays an essential structural role and its presence is essential for fluoride channel function. In terms of biological role, fluoride-specific ion channel. Important for reducing fluoride concentration in the cell, thus reducing its toxicity. In Geobacter sp. (strain M21), this protein is Fluoride-specific ion channel FluC.